A 620-amino-acid polypeptide reads, in one-letter code: Membrane protein insertase YidC (620 aa).

The next 6 helical transmembrane spans lie at 5–25 (QIIG…FMST), 343–363 (LGWP…FDGL), 366–386 (VFSS…LVLL), 436–456 (LSGC…FNFF), 482–502 (LPFT…LMTI), and 529–549 (PVVF…YYFV).

The protein belongs to the OXA1/ALB3/YidC family. Type 1 subfamily. Interacts with the Sec translocase complex via SecD. Specifically interacts with transmembrane segments of nascent integral membrane proteins during membrane integration.

The protein resides in the cell inner membrane. In terms of biological role, required for the insertion and/or proper folding and/or complex formation of integral membrane proteins into the membrane. Involved in integration of membrane proteins that insert both dependently and independently of the Sec translocase complex, as well as at least some lipoproteins. Aids folding of multispanning membrane proteins. This Cytophaga hutchinsonii (strain ATCC 33406 / DSM 1761 / CIP 103989 / NBRC 15051 / NCIMB 9469 / D465) protein is Membrane protein insertase YidC.